The chain runs to 385 residues: U6 small nuclear RNA (adenine-(43)-N(6))-methyltransferase (385 aa).

4 residues coordinate S-adenosyl-L-methionine: Arg54, Gly83, Glu106, and Asn155.

Belongs to the methyltransferase superfamily. METTL16/RlmF family.

The protein resides in the cytoplasm. It localises to the nucleus. It carries out the reaction adenosine in U6 snRNA + S-adenosyl-L-methionine = N(6)-methyladenosine in U6 snRNA + S-adenosyl-L-homocysteine + H(+). Functionally, RNA N6-methyltransferase that mediates N6-methylation of adenine of U6 small nuclear RNA (U6 snRNA). In Schizosaccharomyces pombe (strain 972 / ATCC 24843) (Fission yeast), this protein is U6 small nuclear RNA (adenine-(43)-N(6))-methyltransferase.